A 373-amino-acid polypeptide reads, in one-letter code: 3 beta-hydroxysteroid dehydrogenase/Delta 5--&gt;4-isomerase (373 aa).

Y155 (proton acceptor) is an active-site residue. NAD(+) is bound at residue K159. A helical transmembrane segment spans residues 288-308 (ISLEYWLAFLLEIVSFLLSPI).

Belongs to the 3-beta-HSD family.

Its subcellular location is the endoplasmic reticulum membrane. It is found in the mitochondrion membrane. The catalysed reaction is a 3beta-hydroxy-Delta(5)-steroid + NAD(+) = a 3-oxo-Delta(5)-steroid + NADH + H(+). It carries out the reaction a 3-oxo-Delta(5)-steroid = a 3-oxo-Delta(4)-steroid. It participates in lipid metabolism; steroid biosynthesis. Its function is as follows. 3-beta-HSD is a bifunctional enzyme, that catalyzes the oxidative conversion of Delta(5)-ene-3-beta-hydroxy steroid, and the oxidative conversion of ketosteroids. The 3-beta-HSD enzymatic system plays a crucial role in the biosynthesis of all classes of hormonal steroids. In Canis lupus familiaris (Dog), this protein is 3 beta-hydroxysteroid dehydrogenase/Delta 5--&gt;4-isomerase (HSD3B).